The sequence spans 457 residues: Tubulin beta chain (457 aa).

GTP-binding residues include glutamine 11, glutamate 69, serine 138, glycine 142, threonine 143, glycine 144, asparagine 204, and asparagine 226. Glutamate 69 provides a ligand contact to Mg(2+). The disordered stretch occupies residues 431-457; the sequence is EGEEEEDAYAEGAVVNGDQSYEDQYAA.

The protein belongs to the tubulin family. In terms of assembly, dimer of alpha and beta chains. A typical microtubule is a hollow water-filled tube with an outer diameter of 25 nm and an inner diameter of 15 nM. Alpha-beta heterodimers associate head-to-tail to form protofilaments running lengthwise along the microtubule wall with the beta-tubulin subunit facing the microtubule plus end conferring a structural polarity. Microtubules usually have 13 protofilaments but different protofilament numbers can be found in some organisms and specialized cells. Mg(2+) is required as a cofactor.

It localises to the cytoplasm. It is found in the cytoskeleton. Its function is as follows. Tubulin is the major constituent of microtubules, a cylinder consisting of laterally associated linear protofilaments composed of alpha- and beta-tubulin heterodimers. Microtubules grow by the addition of GTP-tubulin dimers to the microtubule end, where a stabilizing cap forms. Below the cap, tubulin dimers are in GDP-bound state, owing to GTPase activity of alpha-tubulin. The sequence is that of Tubulin beta chain (TUBB1) from Porphyra purpurea (Red seaweed).